The following is a 167-amino-acid chain: MVSNFFHVIQVFEKSATLISKTEHIGFVIYSWRKSTTHLGSRRKFAISIYLSEVSLQKYDCPFSGTSFVVFSLFLICAMAGDVVYADIKTVRTSPLELAFPLQRSVSFNFSTVHKSCPAKDWKVHKGKCYWIAETKKSWNKSQNDCAINNSYLMVIQDITAMVRFNI.

Residues 1-67 (MVSNFFHVIQ…KYDCPFSGTS (67 aa)) are Cytoplasmic-facing. Residues 68 to 88 (FVVFSLFLICAMAGDVVYADI) traverse the membrane as a helical; Signal-anchor for type II membrane protein segment. The Extracellular portion of the chain corresponds to 89 to 167 (KTVRTSPLEL…DITAMVRFNI (79 aa)). 3 N-linked (GlcNAc...) asparagine glycosylation sites follow: N109, N140, and N149. The C-type lectin; atypical domain occupies 116–167 (SCPAKDWKVHKGKCYWIAETKKSWNKSQNDCAINNSYLMVIQDITAMVRFNI).

As to expression, expressed in spleen, lymph node, and tonsil. Lower expression in peripheral blood, bone marrow, and colon. No expression detected in thymus. Highly expressed in dendritic and B-cells.

It localises to the cell membrane. May function in mediating immune cell-cell interactions. May act as a T-cell costimulatory molecule, enhancing anti-CD3-induced proliferation. May play a role in the interaction of dendritic cells with T-cells and the cells of the adaptive immune response. This is Putative C-type lectin-like domain family 1 from Homo sapiens (Human).